A 498-amino-acid chain; its full sequence is Probable dipeptidase B (498 aa).

The active site involves Cys-26.

This sequence belongs to the peptidase C69 family.

It catalyses the reaction an L-aminoacyl-L-amino acid + H2O = 2 an L-alpha-amino acid. The chain is Probable dipeptidase B (pepDB) from Streptococcus pyogenes serotype M1.